A 210-amino-acid chain; its full sequence is Protein RCR2 (210 aa).

A helical transmembrane segment spans residues W41–V61. The interval P125–L149 is disordered. A Phosphoserine modification is found at S161. Polar residues predominate over residues N175 to V199. The disordered stretch occupies residues N175 to K210. T191 is subject to Phosphothreonine.

This sequence to yeast YBR005W.

The protein localises to the membrane. In Saccharomyces cerevisiae (strain ATCC 204508 / S288c) (Baker's yeast), this protein is Protein RCR2 (RCR2).